Reading from the N-terminus, the 179-residue chain is Probable protein archease (179 aa).

The Ca(2+) site is built by D55, D178, and V179.

It belongs to the archease family.

Functionally, activates the tRNA-splicing ligase complex by facilitating the enzymatic turnover of catalytic subunit RtcB. Acts by promoting the guanylylation of RtcB, a key intermediate step in tRNA ligation. Can also alter the NTP specificity of RtcB such that ATP, dGTP or ITP is used efficiently. This is Probable protein archease from Mycobacterium tuberculosis (strain CDC 1551 / Oshkosh).